The sequence spans 96 residues: Co-chaperonin GroES (96 aa).

Belongs to the GroES chaperonin family. Heptamer of 7 subunits arranged in a ring. Interacts with the chaperonin GroEL.

It localises to the cytoplasm. Its function is as follows. Together with the chaperonin GroEL, plays an essential role in assisting protein folding. The GroEL-GroES system forms a nano-cage that allows encapsulation of the non-native substrate proteins and provides a physical environment optimized to promote and accelerate protein folding. GroES binds to the apical surface of the GroEL ring, thereby capping the opening of the GroEL channel. In Citrifermentans bemidjiense (strain ATCC BAA-1014 / DSM 16622 / JCM 12645 / Bem) (Geobacter bemidjiensis), this protein is Co-chaperonin GroES.